We begin with the raw amino-acid sequence, 274 residues long: Large ribosomal subunit protein uL2cz/uL2cy (274 aa).

Disordered regions lie at residues 1–23 and 223–274; these read MAIH…SQVK and MNPV…RRSK.

Belongs to the universal ribosomal protein uL2 family. As to quaternary structure, part of the 50S ribosomal subunit.

Its subcellular location is the plastid. The protein localises to the chloroplast. The sequence is that of Large ribosomal subunit protein uL2cz/uL2cy (rpl2-A) from Ranunculus macranthus (Large buttercup).